The chain runs to 919 residues: GPI ethanolamine phosphate transferase 1 (919 aa).

The Cytoplasmic portion of the chain corresponds to 1–9; the sequence is MWNKTRTTL. Residues 10 to 30 form a helical membrane-spanning segment; it reads LAVGVLFHLFYLWSIFDIYFI. Residues 31–457 are Lumenal-facing; the sequence is SPLVHGMSPY…TTYNWRFIRT (427 aa). 6 N-linked (GlcNAc...) asparagine glycosylation sites follow: Asn-90, Asn-138, Asn-198, Asn-202, Asn-286, and Asn-312. The chain crosses the membrane as a helical span at residues 458–478; sequence IVTFGFVGWIFFSFIIFLKSF. At 479 to 488 the chain is on the cytoplasmic side; sequence ILENVIDDQK. A helical transmembrane segment spans residues 489–509; the sequence is ASPLSHAVFGSIGILLNWILF. Over 510–512 the chain is Lumenal; it reads YQH. A helical membrane pass occupies residues 513-533; it reads SPFNFYMYLLFPLYFWSYIFT. Topologically, residues 534-553 are cytoplasmic; that stretch reads NRSVLRSGIKEFFKGTSPWK. The chain crosses the membrane as a helical span at residues 554–574; that stretch reads RVLITISIISVYEGIVYGFFH. The Lumenal segment spans residues 575–576; sequence RW. Residues 577–597 form a helical membrane-spanning segment; that stretch reads TFTLITNILAFYPFICGVREL. Residue Ser-598 is a topological domain, cytoplasmic. A helical membrane pass occupies residues 599-619; the sequence is VNILWIITSVLLSTFTLFDAV. At 620 to 626 the chain is on the lumenal side; sequence KIEDLNQ. A helical membrane pass occupies residues 627–647; that stretch reads IHLAGLLIILSAFYALYKIHS. At 648–655 the chain is on the cytoplasmic side; it reads RINSYTRA. A helical membrane pass occupies residues 656 to 676; sequence IFAIQISLVAAMLAVTHRSVI. Topologically, residues 677–687 are lumenal; it reads SLQLRQGLPRE. Residues 688–708 form a helical membrane-spanning segment; that stretch reads SQVAGWIIFFVSLFVMPILHY. Over 709 to 720 the chain is Cytoplasmic; the sequence is RKPNNDYKVRLL. The helical transmembrane segment at 721 to 741 threads the bilayer; that stretch reads IIYLTFAPSFIILTISFESLF. Residues 742–776 are Lumenal-facing; it reads YFLFTSYMVQWIEIENKIKEMKTQKDENWLQVLRV. Residues 777–797 form a helical membrane-spanning segment; sequence SVIGFFLLQVAFFGTGNVASI. Residues 798–807 lie on the Cytoplasmic side of the membrane; sequence SSFSLESVCR. Residues 808–828 traverse the membrane as a helical segment; that stretch reads LLPIFDPFLMGALLMLKLIIP. Residues 829–848 are Lumenal-facing; the sequence is YGLLSTCLGILNLKLNFKDY. A helical membrane pass occupies residues 849-869; it reads TISSLIISMSDILSLNFFYLL. Topologically, residues 870–885 are cytoplasmic; that stretch reads RTEGSWLDIGITISNY. The chain crosses the membrane as a helical span at residues 886–906; it reads CLAILSSLFMLILEVLGHVLL. The Lumenal portion of the chain corresponds to 907–919; sequence KNVIIQDKTKKTQ.

This sequence belongs to the PIGG/PIGN/PIGO family. PIGN subfamily. In terms of assembly, interacts with CSF1; CSF1 channels phosphatidylethanolamine to MCD4 in the endoplasmic reticulum at contact sites to support GPI anchor biosynthesis. In terms of processing, N-glycosylated.

The protein resides in the endoplasmic reticulum membrane. Its subcellular location is the golgi apparatus membrane. It localises to the vacuole membrane. The protein operates within glycolipid biosynthesis; glycosylphosphatidylinositol-anchor biosynthesis. In terms of biological role, ethanolamine phosphate transferase involved in glycosylphosphatidylinositol-anchor biosynthesis. Transfers ethanolamine phosphate to the first alpha-1,4-linked mannose of the glycosylphosphatidylinositol precursor of GPI-anchor. Ethanolamine phosphate on the alpha-1,4-linked mannose is essential for further mannosylation by GPI10 and is necessary for an efficient recognition of GPI lipids and GPI proteins by the GPI transamidase, for the efficient transport of GPI anchored proteins from endoplasmic reticulum to Golgi and for the physiological incorporation of ceramides into GPI anchors by lipid remodeling. Also involved in non-mitochondrial ATP movements across membrane and participates in Golgi and endoplasmic reticulum function, Also required for the incorporation of BGL2 into the cell wall. This Saccharomyces cerevisiae (strain ATCC 204508 / S288c) (Baker's yeast) protein is GPI ethanolamine phosphate transferase 1 (MCD4).